The sequence spans 259 residues: Deoxyribose-phosphate aldolase (259 aa).

Asp102 acts as the Proton donor/acceptor in catalysis. Catalysis depends on Lys167, which acts as the Schiff-base intermediate with acetaldehyde. The Proton donor/acceptor role is filled by Lys201.

It belongs to the DeoC/FbaB aldolase family. DeoC type 2 subfamily.

The protein localises to the cytoplasm. It catalyses the reaction 2-deoxy-D-ribose 5-phosphate = D-glyceraldehyde 3-phosphate + acetaldehyde. The protein operates within carbohydrate degradation; 2-deoxy-D-ribose 1-phosphate degradation; D-glyceraldehyde 3-phosphate and acetaldehyde from 2-deoxy-alpha-D-ribose 1-phosphate: step 2/2. Catalyzes a reversible aldol reaction between acetaldehyde and D-glyceraldehyde 3-phosphate to generate 2-deoxy-D-ribose 5-phosphate. The sequence is that of Deoxyribose-phosphate aldolase from Shigella flexneri.